The following is a 1118-amino-acid chain: Protein translocase subunit SecA (1118 aa).

ATP is bound by residues Q176, 194–198, and D693; that span reads GEGKT. The disordered stretch occupies residues 1034 to 1056; sequence QQPVQQPKYRETKDEAGSAFGGG.

Belongs to the SecA family. In terms of assembly, monomer and homodimer. Part of the essential Sec protein translocation apparatus which comprises SecA, SecYEG and auxiliary proteins SecDF. Other proteins may also be involved.

The protein resides in the cell inner membrane. The protein localises to the cytoplasm. It carries out the reaction ATP + H2O + cellular proteinSide 1 = ADP + phosphate + cellular proteinSide 2.. Part of the Sec protein translocase complex. Interacts with the SecYEG preprotein conducting channel. Has a central role in coupling the hydrolysis of ATP to the transfer of proteins into and across the cell membrane, serving as an ATP-driven molecular motor driving the stepwise translocation of polypeptide chains across the membrane. This Cytophaga hutchinsonii (strain ATCC 33406 / DSM 1761 / CIP 103989 / NBRC 15051 / NCIMB 9469 / D465) protein is Protein translocase subunit SecA.